The sequence spans 612 residues: U-box domain-containing protein 11 (612 aa).

Positions 127–196 form a coiled coil; it reads DEVGEQVELA…LHFGEEEEKQ (70 aa). Positions 240–314 constitute a U-box domain; it reads TIPVDFLCPV…SRWCAEHNIE (75 aa). ARM repeat units lie at residues 363–402, 404–443, 445–484, 486–526, and 528–567; these read TDNR…NLSI, ENNK…SLSL, DENK…NLCI, HGNK…VLAN, and QDAK…SLCK.

The enzyme catalyses S-ubiquitinyl-[E2 ubiquitin-conjugating enzyme]-L-cysteine + [acceptor protein]-L-lysine = [E2 ubiquitin-conjugating enzyme]-L-cysteine + N(6)-ubiquitinyl-[acceptor protein]-L-lysine.. The protein operates within protein modification; protein ubiquitination. Its function is as follows. Functions as an E3 ubiquitin ligase. The chain is U-box domain-containing protein 11 (PUB11) from Arabidopsis thaliana (Mouse-ear cress).